The sequence spans 762 residues: Coleoptile phototropism protein 1 (762 aa).

Over residues 1 to 12 (MWESESESHGGE) the composition is skewed to basic and acidic residues. The interval 1–29 (MWESESESHGGERGLVPVGGGGGSGRHEA) is disordered. In terms of domain architecture, BTB spans 51–128 (SDLLVKVGDV…SYGMAVDLTA (78 aa)). The segment covering 227–238 (PAAIRGGGGSGG) has biased composition (gly residues). Disordered regions lie at residues 227–264 (PAAI…RQAV), 460–495 (MAVA…ASAS), 687–718 (QVDG…AWSS), and 731–762 (GADA…NSIS). Positions 268–607 (DWWFEDVSVL…VQVLFTEQVK (340 aa)) constitute an NPH3 domain. Residues 654-691 (AAAKKDINTLKFELESMKAKYLELQHEMDALQKQVDGR) are a coiled coil. The segment covering 696–709 (PSPAAAKIGKQQQQ) has biased composition (low complexity). A compositionally biased stretch (gly residues) spans 736–747 (AGGGVAPPGGGE). Residues 752–762 (KGPRRWRNSIS) show a composition bias toward basic residues.

This sequence belongs to the NPH3 family.

It functions in the pathway protein modification; protein ubiquitination. May act as a substrate-specific adapter of an E3 ubiquitin-protein ligase complex (CUL3-RBX1-BTB) which mediates the ubiquitination and subsequent proteasomal degradation of target proteins. Plays a role as signal transduction component in coleoptile phototropism and lateral translocation of auxin. The chain is Coleoptile phototropism protein 1 (CPT1) from Oryza sativa subsp. japonica (Rice).